Here is a 658-residue protein sequence, read N- to C-terminus: Biosynthetic arginine decarboxylase (658 aa).

Lys-127 carries the N6-(pyridoxal phosphate)lysine modification. 307-317 (FDVGGGLGVDY) contacts substrate.

Belongs to the Orn/Lys/Arg decarboxylase class-II family. SpeA subfamily. Homotetramer. Pyridoxal 5'-phosphate serves as cofactor. Requires Mg(2+) as cofactor. Post-translationally, processed post-translationally to a 70 kDa mature form. In terms of processing, the N-terminus is blocked.

It is found in the periplasm. It carries out the reaction L-arginine + H(+) = agmatine + CO2. It participates in amine and polyamine biosynthesis; agmatine biosynthesis; agmatine from L-arginine: step 1/1. Down-regulated by polyamine end products putrescine and spermidine. In terms of biological role, catalyzes the biosynthesis of agmatine from arginine. The sequence is that of Biosynthetic arginine decarboxylase (speA) from Escherichia coli (strain K12).